We begin with the raw amino-acid sequence, 187 residues long: Probable chorismate pyruvate-lyase (187 aa).

3 residues coordinate substrate: R77, L115, and E174.

This sequence belongs to the UbiC family.

Its subcellular location is the cytoplasm. The catalysed reaction is chorismate = 4-hydroxybenzoate + pyruvate. It functions in the pathway cofactor biosynthesis; ubiquinone biosynthesis. Its function is as follows. Removes the pyruvyl group from chorismate, with concomitant aromatization of the ring, to provide 4-hydroxybenzoate (4HB) for the ubiquinone pathway. This is Probable chorismate pyruvate-lyase from Shewanella sp. (strain ANA-3).